The chain runs to 534 residues: MKLLAVRRLFRIQRVVIRYRLDDLLFALPLPWFLLAVRYVLPWRWFPRKQLELSRGARLRLALQDLGPIFIKFGQILSTRRDLLPEDIADELMLLQDRVPPFDSQQSMKLIEEQLGKKISEVFSRFDVDPLASASVAQVHAAQLKTGEEVVVKVIRPGLKPIIGQDLAWLFILARAAERFSADARLLHPVDVVADYEKTIYDELDLLREAANASQLKRNFEGSPLLYVPQVYWDWCRPKVLVMERIYGVQVTDLATLADQRTDMKMLAERGVEIFFTQVFRDSFFHADMHPGNIFVSTVNPWSPQYIAIDCGIVGSLTPEDQDYLARNLFAFFKRDYRRVAQLHIDSGWVPAETKLNEFEAAIRTVCEPIFEKPLKDISFGQVLMRLFQTARRFNMEVQPQLVLLQKTLLNIEGLGRQLYPDLDLWNTAQPFLERWMRERMSPKTVLGNLHSQMEQLPHLANMTRDLLERMSQPHAKDPAPPWKKRKDDWFLRLLGAAHLVGGVMLAIGGPLNQLGHWPAGIMVAVGVYLIVRR.

Residues 23–43 (DLLFALPLPWFLLAVRYVLPW) traverse the membrane as a helical segment. Residues 125-492 (RFDVDPLASA…WKKRKDDWFL (368 aa)) form the Protein kinase domain. ATP contacts are provided by residues 131 to 139 (LASASVAQV) and Lys-153. Asp-288 functions as the Proton acceptor in the catalytic mechanism. 2 helical membrane passes run 490 to 510 (WFLR…AIGG) and 512 to 532 (LNQL…YLIV).

This sequence belongs to the ABC1 family. UbiB subfamily.

It is found in the cell inner membrane. It participates in cofactor biosynthesis; ubiquinone biosynthesis [regulation]. Its function is as follows. Is probably a protein kinase regulator of UbiI activity which is involved in aerobic coenzyme Q (ubiquinone) biosynthesis. This is Probable protein kinase UbiB from Pseudomonas fluorescens (strain SBW25).